The following is a 404-amino-acid chain: Cytoplasmic tRNA 2-thiolation protein 2 (404 aa).

It belongs to the CTU2/NCS2 family.

It is found in the cytoplasm. It participates in tRNA modification; 5-methoxycarbonylmethyl-2-thiouridine-tRNA biosynthesis. Functionally, plays a central role in 2-thiolation of mcm(5)S(2)U at tRNA wobble positions of tRNA(Lys), tRNA(Glu) and tRNA(Gln). May act by forming a heterodimer with NCS6/CTU1 that ligates sulfur from thiocarboxylated URM1 onto the uridine of tRNAs at wobble position. The sequence is that of Cytoplasmic tRNA 2-thiolation protein 2 from Drosophila yakuba (Fruit fly).